The chain runs to 212 residues: dTTP/UTP pyrophosphatase (212 aa).

Residue Asp88 is the Proton acceptor of the active site.

This sequence belongs to the Maf family. YhdE subfamily. Requires a divalent metal cation as cofactor.

It localises to the cytoplasm. The catalysed reaction is dTTP + H2O = dTMP + diphosphate + H(+). The enzyme catalyses UTP + H2O = UMP + diphosphate + H(+). In terms of biological role, nucleoside triphosphate pyrophosphatase that hydrolyzes dTTP and UTP. May have a dual role in cell division arrest and in preventing the incorporation of modified nucleotides into cellular nucleic acids. The chain is dTTP/UTP pyrophosphatase from Colwellia psychrerythraea (strain 34H / ATCC BAA-681) (Vibrio psychroerythus).